A 421-amino-acid chain; its full sequence is UDP-N-acetylglucosamine 1-carboxyvinyltransferase (421 aa).

Residue 22–23 coordinates phosphoenolpyruvate; the sequence is KN. UDP-N-acetyl-alpha-D-glucosamine is bound at residue R93. C117 acts as the Proton donor in catalysis. C117 is subject to 2-(S-cysteinyl)pyruvic acid O-phosphothioketal. Residues 122 to 126, D308, and L330 contribute to the UDP-N-acetyl-alpha-D-glucosamine site; that span reads RPVDL.

Belongs to the EPSP synthase family. MurA subfamily.

The protein resides in the cytoplasm. It carries out the reaction phosphoenolpyruvate + UDP-N-acetyl-alpha-D-glucosamine = UDP-N-acetyl-3-O-(1-carboxyvinyl)-alpha-D-glucosamine + phosphate. It functions in the pathway cell wall biogenesis; peptidoglycan biosynthesis. Cell wall formation. Adds enolpyruvyl to UDP-N-acetylglucosamine. The chain is UDP-N-acetylglucosamine 1-carboxyvinyltransferase from Helicobacter hepaticus (strain ATCC 51449 / 3B1).